The primary structure comprises 132 residues: Fluoride-specific ion channel FluC (132 aa).

Helical transmembrane passes span 5–25 (LYIA…SGLV), 32–52 (TFPW…GFFA), 70–90 (FVMT…LQTL), and 105–125 (VVGS…AAVG). 2 residues coordinate Na(+): G77 and T80.

It belongs to the fluoride channel Fluc/FEX (TC 1.A.43) family.

It localises to the cell inner membrane. It catalyses the reaction fluoride(in) = fluoride(out). With respect to regulation, na(+) is not transported, but it plays an essential structural role and its presence is essential for fluoride channel function. Fluoride-specific ion channel. Important for reducing fluoride concentration in the cell, thus reducing its toxicity. This Opitutus terrae (strain DSM 11246 / JCM 15787 / PB90-1) protein is Fluoride-specific ion channel FluC.